Consider the following 902-residue polypeptide: Cysteine-tryptophan domain-containing zinc finger protein 3 (902 aa).

The CW-type zinc-finger motif lies at 21-74 (VLIEDNWVCCDMCHKWRLLPYGTNTSMLPKKWICSMLDWLPGMNKCDISEDETT). Zn(2+) contacts are provided by cysteine 30, cysteine 33, cysteine 54, and cysteine 66. 4 disordered regions span residues 131–233 (EHDQ…EDRH), 326–345 (EDNRLSSMDHTSKGGDNENL), 420–480 (QSST…LNAD), and 537–651 (HGPT…SASP). Basic and acidic residues-rich tracts occupy residues 151-169 (KNREVVDSEHYTNDRDPVS) and 193-203 (SHSDGGDLTEK). Basic residues predominate over residues 204–213 (SKKHSKSKNR). Basic and acidic residues-rich tracts occupy residues 214–233 (RGIDRDEHKTSKKTKKEDRH) and 335–345 (HTSKGGDNENL). Residues 421 to 433 (SSTVATSSSSKVS) are compositionally biased toward low complexity. Polar residues-rich tracts occupy residues 450-463 (ESVSSSPLKNSNTD), 564-588 (NSAPSRQGRNGSSNLISEGNKQIEM), and 599-611 (IDNQDMQKSIGQD). A compositionally biased stretch (basic and acidic residues) spans 612–625 (NHSHMKEGKSEVHT). Positions 634 to 648 (KNHTQLRSNVENGDS) are enriched in polar residues.

In terms of tissue distribution, expressed in leaf sheaths, flag leaves, nodes, internodes and panicles.

The protein resides in the nucleus. Its function is as follows. Binds to histones H3K4me1, H3K4me2 and H3K4me3 in GST pull-down assay. May facilitate the recruitment of effectors to mediate gene expression. This chain is Cysteine-tryptophan domain-containing zinc finger protein 3, found in Oryza sativa subsp. japonica (Rice).